A 471-amino-acid chain; its full sequence is MTAKFTDYIVKDIGLAEFGRKEISLAETEMPGLMATREEYGPKQPLKGARIAGSLHMTIQTAVLIETLTALGADVRWVSCNIYSTQDHAAAAIAAAGIPVFAIKGESLEDYWDYTARMFDWHGGGTPNMILDDGGDATMYVHLGLRAENGDTAFLDKPGSDEEVIFFALLKKQLKEKPKGYFAEIAKNIRGVSEETTTGVHRLYDMQKAGTLLWPAINVNDSVTKSKFDNLYGCRESLVDGIRRGTDVMMSGKVAMVAGFGDVGKGSAASLRQAGARVMVSEVDPICALQAAMEGYQVVTMEDAAPIADIFVTATGNKDIITIEHMRAMKDRAIVCNIGHFDNEIQIAHLKNLKWDNIKPQVDEITFPDGKRMILLSEGRLVNLGNATGHPSFVMSASFTNQTLAQIELFANNKDGKYKKEVYVLPKSLDEKVARLHLAKIGVKLTELRKDQADYIGVKVEGPFKADHYRY.

T58, D133, and E195 together coordinate substrate. 196–198 (TTT) contacts NAD(+). Substrate contacts are provided by K225 and D229. Residues N230, 259 to 264 (GFGDVG), E282, N317, 338 to 340 (IGH), and N383 contribute to the NAD(+) site.

It belongs to the adenosylhomocysteinase family. Requires NAD(+) as cofactor.

Its subcellular location is the cytoplasm. The catalysed reaction is S-adenosyl-L-homocysteine + H2O = L-homocysteine + adenosine. Its pathway is amino-acid biosynthesis; L-homocysteine biosynthesis; L-homocysteine from S-adenosyl-L-homocysteine: step 1/1. Its function is as follows. May play a key role in the regulation of the intracellular concentration of adenosylhomocysteine. The sequence is that of Adenosylhomocysteinase from Rhodopseudomonas palustris (strain BisB5).